We begin with the raw amino-acid sequence, 741 residues long: MEHTYQYAWVIPLLPLPVIMSMGFGLFFIPTATRNLRRIWAFPSVLFLSIAMVFSIQLSIQQINGSSIYQYLWSWTVNNDFSLEFGYLIDPLTSIMLILITTVGILVLIYSDGYMSHDEGYLRFFVYISFFTTSMLGLVTSSNLIQIYFFWELVGMCSYLLIGFWFTRPIAASACQKAFVTNRVGDFGLLLGILGFFWITGSLEFRDLFKIANNWIPNNGINSLLTTLCAFLLFLGAVAKSAQFPLHVWLPDAMEGPTPISALIHAATMVAAGIFLLARLFPLFISLPLIMTLISLVGTITLFLGATLAIAQRDIKRSLAYSTMSQLGYMMLALGIGSYQAALFHLITHAYSKALLFLGSGSIIHSMEPLVGYSPEKSQNMVLMGGLRKYIPITRTTFLWGTLSLCGIPPLACFWSKDEILSNSWLYSPFFGIIASFTAGLTAFYMFRIYLLTFDGYLRVHFQNYSTTKEGYLYSISLWGKKIPKRVNRDFILSTTKNGVAFFSQKRPKMKGNTRNRIGYFSTSFGAKNTFAYPHEMGNTMLFPLLILLLFTLFIGFIGISFDNGAMDNGIAELTLLSKWLTPSINLTQESSNSSINSYEFLTNAISSVSLAIFGLFIAYILYGSPYSFFQNLDLINSFYKESPKKYFFFLDQVKKKIYSWSYNRGYMDIFYTRVFTLGIRRLTELTEFFDKGIIDGITNGVGLVSFCIGEEIKYVGGGRISSYLFFFLCYVSVFLFFFIS.

Helical transmembrane passes span 9–29 (WVIP…LFFI), 39–59 (IWAF…IQLS), 89–109 (IDPL…LVLI), 125–145 (FVYI…SNLI), 147–167 (IYFF…FWFT), 185–205 (GDFG…SLEF), 219–239 (NGIN…GAVA), 258–278 (TPIS…FLLA), 280–300 (LFPL…VGTI), 327–347 (LGYM…FHLI), 354–374 (ALLF…VGYS), 396–416 (TTFL…CFWS), 425–445 (WLYS…TAFY), 542–562 (LFPL…GISF), 605–625 (AISS…LYGS), and 721–741 (ISSY…FFIS).

It belongs to the complex I subunit 5 family. As to quaternary structure, NDH is composed of at least 16 different subunits, 5 of which are encoded in the nucleus.

Its subcellular location is the plastid. The protein localises to the chloroplast thylakoid membrane. The enzyme catalyses a plastoquinone + NADH + (n+1) H(+)(in) = a plastoquinol + NAD(+) + n H(+)(out). It catalyses the reaction a plastoquinone + NADPH + (n+1) H(+)(in) = a plastoquinol + NADP(+) + n H(+)(out). In terms of biological role, NDH shuttles electrons from NAD(P)H:plastoquinone, via FMN and iron-sulfur (Fe-S) centers, to quinones in the photosynthetic chain and possibly in a chloroplast respiratory chain. The immediate electron acceptor for the enzyme in this species is believed to be plastoquinone. Couples the redox reaction to proton translocation, and thus conserves the redox energy in a proton gradient. This is NAD(P)H-quinone oxidoreductase subunit 5, chloroplastic (ndhF) from Lolium perenne (Perennial ryegrass).